The chain runs to 316 residues: ATP synthase gamma chain (316 aa).

Belongs to the ATPase gamma chain family. As to quaternary structure, F-type ATPases have 2 components, CF(1) - the catalytic core - and CF(0) - the membrane proton channel. CF(1) has five subunits: alpha(3), beta(3), gamma(1), delta(1), epsilon(1). CF(0) has three main subunits: a, b and c.

It localises to the cellular thylakoid membrane. Its function is as follows. Produces ATP from ADP in the presence of a proton gradient across the membrane. The gamma chain is believed to be important in regulating ATPase activity and the flow of protons through the CF(0) complex. In Synechococcus sp. (strain WH7803), this protein is ATP synthase gamma chain.